The chain runs to 37 residues: MKVKPSVKPICDKCKVIRRHGRVMVICENPRHKQRQG.

Belongs to the bacterial ribosomal protein bL36 family.

The polypeptide is Large ribosomal subunit protein bL36 (Nocardioides sp. (strain ATCC BAA-499 / JS614)).